The primary structure comprises 99 residues: Keratinocyte differentiation-associated protein (99 aa).

Residues 1–22 form the signal peptide; the sequence is MKIPVLPAVVLLSLLALHSAQG.

As to expression, highly expressed in skin, but not detectable in any other tissue examined. Expression restricted to cornified/stratified epithelia and not detected in non-cornified/stratified epithelia.

It is found in the secreted. May act as a soluble regulator of keratinocyte differentiation. May play an important role in embryonic skin morphogenesis. In Canis lupus familiaris (Dog), this protein is Keratinocyte differentiation-associated protein.